We begin with the raw amino-acid sequence, 175 residues long: Mitochondrial inner membrane protease subunit 2 (175 aa).

Residues Phe-19 to Ala-37 form a helical membrane-spanning segment. Catalysis depends on residues Ser-43 and Lys-91.

Belongs to the peptidase S26 family. IMP2 subfamily. As to quaternary structure, heterodimer of 2 subunits, IMMPL1 and IMMPL2. Expressed in all tissues tested except adult liver and lung.

The protein localises to the mitochondrion inner membrane. Its function is as follows. Catalyzes the removal of transit peptides required for the targeting of proteins from the mitochondrial matrix, across the inner membrane, into the inter-membrane space. Known to process the nuclear encoded protein DIABLO. The polypeptide is Mitochondrial inner membrane protease subunit 2 (IMMP2L) (Homo sapiens (Human)).